Consider the following 289-residue polypeptide: 4-hydroxy-3-methylbut-2-enyl diphosphate reductase (289 aa).

Cysteine 13 contributes to the [4Fe-4S] cluster binding site. Residues histidine 41 and histidine 75 each contribute to the (2E)-4-hydroxy-3-methylbut-2-enyl diphosphate site. 2 residues coordinate dimethylallyl diphosphate: histidine 41 and histidine 75. Isopentenyl diphosphate contacts are provided by histidine 41 and histidine 75. Residue cysteine 97 participates in [4Fe-4S] cluster binding. Histidine 129 is a (2E)-4-hydroxy-3-methylbut-2-enyl diphosphate binding site. A dimethylallyl diphosphate-binding site is contributed by histidine 129. Isopentenyl diphosphate is bound at residue histidine 129. Glutamate 131 (proton donor) is an active-site residue. (2E)-4-hydroxy-3-methylbut-2-enyl diphosphate is bound at residue threonine 167. Cysteine 198 serves as a coordination point for [4Fe-4S] cluster. 4 residues coordinate (2E)-4-hydroxy-3-methylbut-2-enyl diphosphate: serine 226, serine 227, asparagine 228, and serine 270. Serine 226, serine 227, asparagine 228, and serine 270 together coordinate dimethylallyl diphosphate. Residues serine 226, serine 227, asparagine 228, and serine 270 each coordinate isopentenyl diphosphate.

Belongs to the IspH family. The cofactor is [4Fe-4S] cluster.

It catalyses the reaction isopentenyl diphosphate + 2 oxidized [2Fe-2S]-[ferredoxin] + H2O = (2E)-4-hydroxy-3-methylbut-2-enyl diphosphate + 2 reduced [2Fe-2S]-[ferredoxin] + 2 H(+). It carries out the reaction dimethylallyl diphosphate + 2 oxidized [2Fe-2S]-[ferredoxin] + H2O = (2E)-4-hydroxy-3-methylbut-2-enyl diphosphate + 2 reduced [2Fe-2S]-[ferredoxin] + 2 H(+). It participates in isoprenoid biosynthesis; dimethylallyl diphosphate biosynthesis; dimethylallyl diphosphate from (2E)-4-hydroxy-3-methylbutenyl diphosphate: step 1/1. The protein operates within isoprenoid biosynthesis; isopentenyl diphosphate biosynthesis via DXP pathway; isopentenyl diphosphate from 1-deoxy-D-xylulose 5-phosphate: step 6/6. Its function is as follows. Catalyzes the conversion of 1-hydroxy-2-methyl-2-(E)-butenyl 4-diphosphate (HMBPP) into a mixture of isopentenyl diphosphate (IPP) and dimethylallyl diphosphate (DMAPP). Acts in the terminal step of the DOXP/MEP pathway for isoprenoid precursor biosynthesis. This chain is 4-hydroxy-3-methylbut-2-enyl diphosphate reductase, found in Bacteroides thetaiotaomicron (strain ATCC 29148 / DSM 2079 / JCM 5827 / CCUG 10774 / NCTC 10582 / VPI-5482 / E50).